The chain runs to 142 residues: MAKTMQLEIVSAEAAIFSGKVEMIVVTGGMGELGIYPGHRQLLTSLKPGQIKAILEGGKEEVFYMSGGMLEVQPEIVTILADTALRAVDLDEAAAISAKEEAERRLAKQKAGIEYSKAMTELAEAAAQLRAIQMLRKSAKKH.

Belongs to the ATPase epsilon chain family. As to quaternary structure, F-type ATPases have 2 components, CF(1) - the catalytic core - and CF(0) - the membrane proton channel. CF(1) has five subunits: alpha(3), beta(3), gamma(1), delta(1), epsilon(1). CF(0) has three main subunits: a, b and c.

The protein localises to the cell inner membrane. Its function is as follows. Produces ATP from ADP in the presence of a proton gradient across the membrane. In Coxiella burnetii (strain CbuK_Q154) (Coxiella burnetii (strain Q154)), this protein is ATP synthase epsilon chain.